Here is a 225-residue protein sequence, read N- to C-terminus: NAD(P)H-quinone oxidoreductase subunit K, chloroplastic (225 aa).

[4Fe-4S] cluster-binding residues include cysteine 43, cysteine 44, cysteine 108, and cysteine 139.

It belongs to the complex I 20 kDa subunit family. As to quaternary structure, NDH is composed of at least 16 different subunits, 5 of which are encoded in the nucleus. The cofactor is [4Fe-4S] cluster.

It is found in the plastid. The protein resides in the chloroplast thylakoid membrane. It carries out the reaction a plastoquinone + NADH + (n+1) H(+)(in) = a plastoquinol + NAD(+) + n H(+)(out). It catalyses the reaction a plastoquinone + NADPH + (n+1) H(+)(in) = a plastoquinol + NADP(+) + n H(+)(out). Its function is as follows. NDH shuttles electrons from NAD(P)H:plastoquinone, via FMN and iron-sulfur (Fe-S) centers, to quinones in the photosynthetic chain and possibly in a chloroplast respiratory chain. The immediate electron acceptor for the enzyme in this species is believed to be plastoquinone. Couples the redox reaction to proton translocation, and thus conserves the redox energy in a proton gradient. The protein is NAD(P)H-quinone oxidoreductase subunit K, chloroplastic of Dioscorea elephantipes (Elephant's foot yam).